The following is a 550-amino-acid chain: Efflux pump DEP3 (550 aa).

Positions 1 to 33 are disordered; sequence MSEQSTLAGPYTEKPGVESQNPTGDGKASFDET. Helical transmembrane passes span 44–64, 78–98, 109–129, 139–159, 172–192, 199–219, 242–262, 268–288, 319–339, 351–371, and 373–393; these read AIAYAAMLSTTFLFALDNTIV, LELISWIGTGFALGTMFILLW, WVYIFNILLFEVGSAVCGAAP, VIAGIGGSGMYSGTLTYVSVL, STVVWGVGSVVGPVVGGAFAA, WGFYINLPIGAVFAPAYMILF, AVIFLAGSACLTVALTFGGVV, GTIIALWTVTGVLLVAFIVLL, FLASGIILAMTYYVPLYFQFI, LLPLIMFMVAFSMVNGFLMPK, and GLIPIWYIVGSALTLIGSALM. A glycan (N-linked (GlcNAc...) asparagine) is linked at N399. 3 consecutive transmembrane segments (helical) span residues 410–430, 439–459, and 515–535; these read ILVGAGAGCYIVAGFAIVQSL, AVGAMTISQDLGMVLFLAICG, and SIWAFFMAAAALSFVCSWPLF.

This sequence belongs to the major facilitator superfamily. TCR/Tet family.

The protein localises to the cell membrane. In terms of biological role, efflux pump; part of the gene cluster that mediates the biosynthesis of depudecin, a highly oxidized eleven-carbon linear polyketide that acts as a histone deacetylase (HDAC) inhibitor and makes a small contribution to pathogenesis. Is presumed either to be responsible for exporting depudecin, to provide self-protection, or both. The chain is Efflux pump DEP3 from Fusarium langsethiae.